The chain runs to 333 residues: 5-formaminoimidazole-4-carboxamide-1-(beta)-D-ribofuranosyl 5'-monophosphate synthetase (333 aa).

5-amino-1-(5-phospho-beta-D-ribosyl)imidazole-4-carboxamide-binding residues include H20 and S85. Residues 106-313 form the ATP-grasp domain; the sequence is RELIKWEADQ…YFDRPMDMGE (208 aa). ATP is bound by residues 136 to 187 and E209; that span reads PEEV…VPAY. N229 is a 5-amino-1-(5-phospho-beta-D-ribosyl)imidazole-4-carboxamide binding site. E268 and E281 together coordinate Mg(2+).

Belongs to the phosphohexose mutase family. Mg(2+) serves as cofactor. The cofactor is Mn(2+).

The enzyme catalyses 5-amino-1-(5-phospho-beta-D-ribosyl)imidazole-4-carboxamide + formate + ATP = 5-formamido-1-(5-phospho-D-ribosyl)imidazole-4-carboxamide + ADP + phosphate. It participates in purine metabolism; IMP biosynthesis via de novo pathway; 5-formamido-1-(5-phospho-D-ribosyl)imidazole-4-carboxamide from 5-amino-1-(5-phospho-D-ribosyl)imidazole-4-carboxamide (formate route): step 1/1. Its function is as follows. Catalyzes the ATP- and formate-dependent formylation of 5-aminoimidazole-4-carboxamide-1-beta-d-ribofuranosyl 5'-monophosphate (AICAR) to 5-formaminoimidazole-4-carboxamide-1-beta-d-ribofuranosyl 5'-monophosphate (FAICAR) in the absence of folates. In Pyrobaculum islandicum (strain DSM 4184 / JCM 9189 / GEO3), this protein is 5-formaminoimidazole-4-carboxamide-1-(beta)-D-ribofuranosyl 5'-monophosphate synthetase.